We begin with the raw amino-acid sequence, 592 residues long: Aspartate--tRNA ligase (592 aa).

L-aspartate is bound at residue Glu-171. Residues 195–198 form an aspartate region; the sequence is QLFK. Arg-217 provides a ligand contact to L-aspartate. ATP contacts are provided by residues 217–219 and Gln-226; that span reads RDE. His-448 contacts L-aspartate. Glu-482 is a binding site for ATP. An L-aspartate-binding site is contributed by Arg-489. 534-537 serves as a coordination point for ATP; that stretch reads GLDR.

Belongs to the class-II aminoacyl-tRNA synthetase family. Type 1 subfamily. Homodimer.

It is found in the cytoplasm. The enzyme catalyses tRNA(Asp) + L-aspartate + ATP = L-aspartyl-tRNA(Asp) + AMP + diphosphate. Functionally, catalyzes the attachment of L-aspartate to tRNA(Asp) in a two-step reaction: L-aspartate is first activated by ATP to form Asp-AMP and then transferred to the acceptor end of tRNA(Asp). This is Aspartate--tRNA ligase from Pseudoalteromonas translucida (strain TAC 125).